The chain runs to 971 residues: UPF0182 protein CMS1887 (971 aa).

Transmembrane regions (helical) follow at residues 16-36, 56-76, 108-128, 161-181, 205-225, 255-275, and 281-301; these read LAIT…FAGF, WGAG…PVFV, LAMF…ASSG, FYHA…LGVL, IQIA…IWLD, TILA…AAIG, and IIGT…YPAI. Residues 687-702 are compositionally biased toward polar residues; it reads QDLWTTPNDPTATTEA. 2 disordered regions span residues 687–706 and 874–924; these read QDLW…GTPA and GATA…AQDV. Low complexity-rich tracts occupy residues 884 to 900 and 907 to 921; these read PTTP…TDGA and STPT…AAPA.

This sequence belongs to the UPF0182 family.

It is found in the cell membrane. The polypeptide is UPF0182 protein CMS1887 (Clavibacter sepedonicus (Clavibacter michiganensis subsp. sepedonicus)).